The sequence spans 430 residues: Phosphomethylpyrimidine synthase 2 (430 aa).

Residues Asn-66, Met-95, Tyr-124, His-164, 186-188 (SRG), 227-230 (DGFR), and Glu-266 contribute to the substrate site. His-270 serves as a coordination point for Zn(2+). Tyr-293 serves as a coordination point for substrate. Residue His-334 participates in Zn(2+) binding. Positions 411, 414, and 418 each coordinate [4Fe-4S] cluster.

Belongs to the ThiC family. As to quaternary structure, homodimer. [4Fe-4S] cluster serves as cofactor.

It catalyses the reaction 5-amino-1-(5-phospho-beta-D-ribosyl)imidazole + S-adenosyl-L-methionine = 4-amino-2-methyl-5-(phosphooxymethyl)pyrimidine + CO + 5'-deoxyadenosine + formate + L-methionine + 3 H(+). Its pathway is cofactor biosynthesis; thiamine diphosphate biosynthesis. In terms of biological role, catalyzes the synthesis of the hydroxymethylpyrimidine phosphate (HMP-P) moiety of thiamine from aminoimidazole ribotide (AIR) in a radical S-adenosyl-L-methionine (SAM)-dependent reaction. The polypeptide is Phosphomethylpyrimidine synthase 2 (Syntrophotalea carbinolica (strain DSM 2380 / NBRC 103641 / GraBd1) (Pelobacter carbinolicus)).